The chain runs to 598 residues: MFS transporter L2 (598 aa).

3 consecutive transmembrane segments (helical) span residues 83 to 103 (IAAFLSLCIIVLMAALDATSI), 122 to 142 (FWAGTSFLLTSTIFQPVLGSF), and 150 to 170 (SLIYISLVFFLAGSIIPAVAN). N171 carries an N-linked (GlcNAc...) asparagine glycan. 5 helical membrane passes run 183–203 (GVGGGGIIALTEMVVVDTVPL), 212–232 (FFGMMWSFGTVAGPLIGGAFA), 239–259 (WVFWINLPFLGIGTVLITVFL), 277–297 (WIGMVLFLGSTTGFLIPITWG), and 309–329 (LVPLIVSAAGIVAFIVHQEKF). N342 carries N-linked (GlcNAc...) asparagine glycosylation. The next 6 helical transmembrane spans lie at 346–366 (ALLYLTTVIHGIILWAILYFM), 383–403 (VALFPWTFTVAPGAVATGIAI), 411–431 (WANWAGWFLATLGSGLLILLK), 439–459 (WIFLNLVGGIGTGILFPAMAL), 476–496 (MFSFFRAFGQTLGVAIGGVVF), and 550–570 (YIWIVATVLAGVSLVATLFID).

It belongs to the major facilitator superfamily.

It localises to the membrane. MFS transporter; part of the gene cluster that mediates the biosynthesis of squalestatin S1 (SQS1, also known as zaragozic acid A), a lead compound for the treatment of hyper-cholesterolemia by targeting squalene synthase (SS). The polypeptide is MFS transporter L2 (Phoma sp. (strain ATCC 20986 / MF5453)).